Here is an 87-residue protein sequence, read N- to C-terminus: Large ribosomal subunit protein bL27 (87 aa).

Positions 1-11 are enriched in polar residues; that stretch reads MASKASGGSTR. The disordered stretch occupies residues 1–21; it reads MASKASGGSTRNGRDSNSKRL.

Belongs to the bacterial ribosomal protein bL27 family.

The sequence is that of Large ribosomal subunit protein bL27 from Hydrogenobaculum sp. (strain Y04AAS1).